Reading from the N-terminus, the 970-residue chain is Sodium/calcium exchanger 1 (970 aa).

The N-terminal stretch at Met1–Ala32 is a signal peptide. Topologically, residues Glu33–Lys71 are extracellular. Asn41 is a glycosylation site (N-linked (GlcNAc...) asparagine). A helical transmembrane segment spans residues Ile72–Ile92. The Cytoplasmic portion of the chain corresponds to Ala93–Asn133. Residues Leu134–Cys154 form a helical membrane-spanning segment. Residues Ala138–Ile178 form an Alpha-1 repeat. Residues Gly155–Thr167 lie on the Extracellular side of the membrane. Asn157 carries N-linked (GlcNAc...) asparagine glycosylation. Residues Ile168–Pro188 form a helical membrane-spanning segment. Topologically, residues Asp189 to Phe201 are cytoplasmic. Residues Phe202 to Ile222 form a helical membrane-spanning segment. Residues Ser223–Glu228 lie on the Extracellular side of the membrane. The helical transmembrane segment at Val229–Ala249 threads the bilayer. The Cytoplasmic portion of the chain corresponds to Asp250 to Gly797. Positions Arg251–Gly270 are putative calmodulin-binding region. Ser282 and Ser389 each carry phosphoserine. Calx-beta domains are found at residues Val393–Ser493 and Ala524–Gly624. 16 residues coordinate Ca(2+): Glu417, Asp453, Asp478, Asp479, Ile481, Glu483, Glu486, Asp530, Asp531, Asp532, Glu548, Asp584, Asp610, Glu611, Glu612, and Glu715. The chain crosses the membrane as a helical span at residues Trp798 to Leu818. Residues Ala819 to His821 lie on the Extracellular side of the membrane. A helical membrane pass occupies residues Phe822–Thr842. The stretch at Ala839 to Val875 is one Alpha-2 repeat. At Ser843–Asn871 the chain is on the cytoplasmic side. A helical transmembrane segment spans residues Ala872 to Ala892. Residues Asn893–Thr903 are Extracellular-facing. Residues Leu904 to Tyr924 form a helical membrane-spanning segment. The Cytoplasmic portion of the chain corresponds to Arg925 to Lys941. Residues Leu942–Glu962 traverse the membrane as a helical segment. Residues Ala963–Phe970 lie on the Extracellular side of the membrane.

This sequence belongs to the Ca(2+):cation antiporter (CaCA) (TC 2.A.19) family. SLC8 subfamily. Cardiac sarcolemma (at protein level).

Its subcellular location is the cell membrane. It localises to the sarcolemma. The catalysed reaction is Ca(2+)(in) + 3 Na(+)(out) = Ca(2+)(out) + 3 Na(+)(in). Its activity is regulated as follows. Activated by micromolar levels of Ca(2+). In the absence of regulatory Ca(2+), channels open rapidly, and then inactivate rapidly. Inactivation is enhanced by Na(+) and is inhibited by micromolar levels of Ca(2+). Mediates the exchange of one Ca(2+) ion against three to four Na(+) ions across the cell membrane, and thereby contributes to the regulation of cytoplasmic Ca(2+) levels and Ca(2+)-dependent cellular processes. Contributes to Ca(2+) transport during excitation-contraction coupling in muscle. In a first phase, voltage-gated channels mediate the rapid increase of cytoplasmic Ca(2+) levels due to release of Ca(2+) stores from the endoplasmic reticulum. SLC8A1 mediates the export of Ca(2+) from the cell during the next phase, so that cytoplasmic Ca(2+) levels rapidly return to baseline. Required for normal embryonic heart development and the onset of heart contractions. The protein is Sodium/calcium exchanger 1 (SLC8A1) of Canis lupus familiaris (Dog).